Here is a 396-residue protein sequence, read N- to C-terminus: Elongation factor Tu (396 aa).

In terms of domain architecture, tr-type G spans 11 to 205; that stretch reads KPHVNIGTIG…IVDEYIPTPE (195 aa). The interval 20–27 is G1; sequence GHVDHGKT. 20–27 contacts GTP; it reads GHVDHGKT. Residue T27 coordinates Mg(2+). Residues 61–65 are G2; it reads GITIN. The tract at residues 82-85 is G3; sequence DAPG. Residues 82-86 and 137-140 contribute to the GTP site; these read DAPGH and NKCD. Positions 137 to 140 are G4; sequence NKCD. The interval 175–177 is G5; it reads SAL.

Belongs to the TRAFAC class translation factor GTPase superfamily. Classic translation factor GTPase family. EF-Tu/EF-1A subfamily. In terms of assembly, monomer.

Its subcellular location is the cytoplasm. It catalyses the reaction GTP + H2O = GDP + phosphate + H(+). Its function is as follows. GTP hydrolase that promotes the GTP-dependent binding of aminoacyl-tRNA to the A-site of ribosomes during protein biosynthesis. The sequence is that of Elongation factor Tu from Lactobacillus acidophilus (strain ATCC 700396 / NCK56 / N2 / NCFM).